The following is a 127-amino-acid chain: Large ribosomal subunit protein eL8 (127 aa).

Belongs to the eukaryotic ribosomal protein eL8 family. As to quaternary structure, part of the 50S ribosomal subunit. Probably part of the RNase P complex.

It localises to the cytoplasm. In terms of biological role, multifunctional RNA-binding protein that recognizes the K-turn motif in ribosomal RNA, the RNA component of RNase P, box H/ACA, box C/D and box C'/D' sRNAs. This Aeropyrum pernix (strain ATCC 700893 / DSM 11879 / JCM 9820 / NBRC 100138 / K1) protein is Large ribosomal subunit protein eL8.